A 296-amino-acid chain; its full sequence is Carboxylesterase YbfK (296 aa).

Residues Ser-129, Glu-244, and His-273 each act as charge relay system in the active site.

It belongs to the AB hydrolase superfamily.

The protein localises to the cytoplasm. It catalyses the reaction a carboxylic ester + H2O = an alcohol + a carboxylate + H(+). In terms of biological role, shows carboxylesterase activity in vitro. The polypeptide is Carboxylesterase YbfK (ybfK) (Bacillus subtilis (strain 168)).